We begin with the raw amino-acid sequence, 797 residues long: Plakophilin-3 (797 aa).

A disordered region spans residues 56 to 82 (QLGQQPRHNGAAEPEPEAETARGTSRG). The residue at position 81 (R81) is an Omega-N-methylarginine. Phosphoserine occurs at positions 123, 180, and 183. A Phosphotyrosine; by SRC modification is found at Y195. Phosphoserine is present on residues S238 and S240. T250 bears the Phosphothreonine mark. At R261 the chain carries Omega-N-methylarginine. The interval 283-288 (SLSLSL) is required for interaction with SFN. A phosphoserine mark is found at S285, S313, S314, and S331. The interval 294 to 724 (LPDVHGFNSY…AEVLVNIIAV (431 aa)) is required for interaction with GSK3B. ARM repeat units follow at residues 305-348 (SHRT…HKCY), 351-390 (AAAK…NLIY), 393-432 (ADNK…NLSS), 449-487 (TDLV…NLSS), 491-536 (ATRQ…NLSY), 596-637 (PKGL…NITA), 645-684 (VLSR…NLSR), and 689-730 (KDEM…NLVV). A required for binding to PKP2 mRNA region spans residues 516–797 (AGKCEDKSVE…GYRKEDFLGP (282 aa)).

This sequence belongs to the beta-catenin family. In terms of assembly, found in a complex composed of CDH1, RAP1A and PKP3; PKP3 acts as a scaffold protein within the complex, the complex is required for CDH1 localization to mature desmosome cell junctions. Interacts with FXR1; the interaction facilitates the binding of PKP3 to PKP2 mRNA. Interacts (via ARM repeats) with GSK3B; the interaction may be involved in PKP3 protein degradation. Interacts with hyperphosphorylated and hypophosphorylated RB1; the interaction inhibits RB1 interaction with and repression of the transcription factor E2F1, potentially via sequestering RB1 to the cytoplasm. Interacts with CDKN1A; the interaction sequesters CDKN1A to the cytoplasm thereby repressing its role as an inhibitor of CDK4- and CDK6-driven RB1 phosphorylation. Interacts (via N-terminus) with SFN; the interaction maintains the cytoplasmic pool of PKP3, facilitates PKP3 exchange at desmosomes and restricts PKP3 localization to existing desmosome cell junctions. Interacts (via N-terminus) with JUP; the interaction is required for PKP3 localization to desmosome cell-cell junctions. Phosphorylated at Ser-285 when localized to the cytoplasm, PKP3 at desmosome cell junctions is not phosphorylated. Phosphorylation at Try-195 by SRC is induced by reactive oxygen species and potentially acts as a release mechanism from desmosome cell-cell junctions. Expressed in the epidermis of the skin, in squamous non-cornifying epithelial cells in the vagina, single layer epithelia of the duodenum and pancreas acini and non-epithelial dendritic reticulum cells of lymph node follicles (at protein level). In terms of tissue distribution, expressed in the oral cavity mucosa, epidermis and small intestine epithelium (at protein level). As to expression, expressed in the oral cavity mucosa and epithelial cells of the crypts and villi in the small intestine (at protein level). Expressed in the epidermis with more abundant expression found in the basal and low spinous cells (at protein level).

The protein localises to the nucleus. The protein resides in the cell junction. It is found in the desmosome. Its subcellular location is the cytoplasm. It localises to the cell membrane. The protein localises to the adherens junction. Its function is as follows. A component of desmosome cell-cell junctions which are required for positive regulation of cellular adhesion. Required for the localization of DSG2, DSP and PKP2 to mature desmosome junctions. May also play a role in the maintenance of DSG3 protein abundance in keratinocytes. Required for the formation of DSP-containing desmosome precursors in the cytoplasm during desmosome assembly. Also regulates the accumulation of CDH1 to mature desmosome junctions, via cAMP-dependent signaling and its interaction with activated RAP1A. Positively regulates the stabilization of PKP2 mRNA and therefore protein abundance, via its interaction with FXR1, may also regulate the protein abundance of DSP via the same mechanism. May also regulate the protein abundance of the desmosome component PKP1. Required for the organization of desmosome junctions at intercellular borders between basal keratinocytes of the epidermis, as a result plays a role in maintenance of the dermal barrier and regulation of the dermal inflammatory response. Required during epidermal keratinocyte differentiation for cell adherence at tricellular cell-cell contacts, via regulation of the timely formation of adherens junctions and desmosomes in a calcium-dependent manner, and may also play a role in the organization of the intracellular actin fiber belt. Acts as a negative regulator of the inflammatory response in hematopoietic cells of the skin and intestine, via modulation of proinflammatory cytokine production. Important for epithelial barrier maintenance in the intestine to reduce intestinal permeability, thereby plays a role in protection from intestinal-derived endotoxemia. Required for the development of hair follicles, via a role in the regulation of inner root sheaf length, correct alignment and anterior-posterior polarity of hair follicles. Promotes proliferation and cell-cycle G1/S phase transition of keratinocytes. Promotes E2F1-driven transcription of G1/S phase promoting genes by acting to release E2F1 from its inhibitory interaction with RB1, via sequestering RB1 and CDKN1A to the cytoplasm and thereby increasing CDK4- and CDK6-driven phosphorylation of RB1. May act as a scaffold protein to facilitate MAPK phosphorylation of RPS6KA protein family members and subsequently promote downstream EGFR signaling. May play a role in the positive regulation of transcription of Wnt-mediated TCF-responsive target genes. This is Plakophilin-3 (PKP3) from Homo sapiens (Human).